Here is a 500-residue protein sequence, read N- to C-terminus: Probable malate:quinone oxidoreductase (500 aa).

Belongs to the MQO family. FAD serves as cofactor.

It carries out the reaction (S)-malate + a quinone = a quinol + oxaloacetate. The protein operates within carbohydrate metabolism; tricarboxylic acid cycle; oxaloacetate from (S)-malate (quinone route): step 1/1. This Bordetella avium (strain 197N) protein is Probable malate:quinone oxidoreductase.